We begin with the raw amino-acid sequence, 300 residues long: Tetrahydromethanopterin S-methyltransferase subunit E (300 aa).

6 consecutive transmembrane segments (helical) span residues 62–82 (PVSY…LMGM), 86–106 (PILA…AYSV), 135–155 (PIVG…YLAV), 158–178 (LGNP…VGAI), 226–246 (YFCS…IIFL), and 261–281 (LITK…TTLL).

This sequence belongs to the MtrE family. The complex is composed of 8 subunits; MtrA, MtrB, MtrC, MtrD, MtrE, MtrF, MtrG and MtrH.

The protein resides in the cell membrane. It carries out the reaction 5-methyl-5,6,7,8-tetrahydromethanopterin + coenzyme M + 2 Na(+)(in) = 5,6,7,8-tetrahydromethanopterin + methyl-coenzyme M + 2 Na(+)(out). The protein operates within one-carbon metabolism; methanogenesis from CO(2); methyl-coenzyme M from 5,10-methylene-5,6,7,8-tetrahydromethanopterin: step 2/2. Its function is as follows. Part of a complex that catalyzes the formation of methyl-coenzyme M and tetrahydromethanopterin from coenzyme M and methyl-tetrahydromethanopterin. This is an energy-conserving, sodium-ion translocating step. The polypeptide is Tetrahydromethanopterin S-methyltransferase subunit E (Methanococcus aeolicus (strain ATCC BAA-1280 / DSM 17508 / OCM 812 / Nankai-3)).